Consider the following 271-residue polypeptide: MKITNTLLNAAALLAVTEAATITKFFTASTQTLFVTQTSQTVVATKSFVETIYSAPPKQLTSKTQDSTSPTTSSVNSLTSSSATSYVETTTPAPSSSTLTTSTISSSTASEDSDATPTADVEFAEEILKEHNVKRALHGVPALSWSNKLAEYAQDYANTGFDCSNLNLKHSGGPYGENLAAGYMGGISPVDAWYDEISMVDWNNVDFTESTGHFTQLVWRSTTQVGCAKMMCSTAWRQITVCEYLPRGNVIGLNVTSGHSYFVDNVLPPLK.

The first 19 residues, 1-19, serve as a signal peptide directing secretion; the sequence is MKITNTLLNAAALLAVTEA. Positions 59–118 are disordered; that stretch reads QLTSKTQDSTSPTTSSVNSLTSSSATSYVETTTPAPSSSTLTTSTISSSTASEDSDATPT. Residues 67 to 118 show a composition bias toward low complexity; that stretch reads STSPTTSSVNSLTSSSATSYVETTTPAPSSSTLTTSTISSSTASEDSDATPT. Positions 128 to 244 constitute an SCP domain; that stretch reads LKEHNVKRAL…AWRQITVCEY (117 aa). Residue Asn-254 is glycosylated (N-linked (GlcNAc...) asparagine).

It belongs to the CRISP family.

The protein localises to the secreted. It localises to the cell wall. Functionally, cell wall protein involved in cell wall integrity and which plays a role in virulence. The polypeptide is Repressed by EFG1 protein 1 (RBE1) (Candida albicans (strain SC5314 / ATCC MYA-2876) (Yeast)).